A 673-amino-acid polypeptide reads, in one-letter code: DNA ligase (673 aa).

Residues 35–39 (DAQYD), 84–85 (SL), and glutamate 115 contribute to the NAD(+) site. Catalysis depends on lysine 117, which acts as the N6-AMP-lysine intermediate. NAD(+)-binding residues include arginine 138, glutamate 178, lysine 294, and lysine 318. Cysteine 412, cysteine 415, cysteine 430, and cysteine 435 together coordinate Zn(2+). In terms of domain architecture, BRCT spans 594–673 (LQSDRLAGKS…DELHALLVDE (80 aa)).

The protein belongs to the NAD-dependent DNA ligase family. LigA subfamily. Mg(2+) serves as cofactor. It depends on Mn(2+) as a cofactor.

The catalysed reaction is NAD(+) + (deoxyribonucleotide)n-3'-hydroxyl + 5'-phospho-(deoxyribonucleotide)m = (deoxyribonucleotide)n+m + AMP + beta-nicotinamide D-nucleotide.. In terms of biological role, DNA ligase that catalyzes the formation of phosphodiester linkages between 5'-phosphoryl and 3'-hydroxyl groups in double-stranded DNA using NAD as a coenzyme and as the energy source for the reaction. It is essential for DNA replication and repair of damaged DNA. This is DNA ligase from Herpetosiphon aurantiacus (strain ATCC 23779 / DSM 785 / 114-95).